Here is a 226-residue protein sequence, read N- to C-terminus: Ribonuclease 3 (226 aa).

An RNase III domain is found at 7–129; that stretch reads LPRLCRTLSY…IIGAVYLDSD (123 aa). Glu-42 serves as a coordination point for Mg(2+). The active site involves Asp-46. Residues Asp-115 and Glu-118 each contribute to the Mg(2+) site. The active site involves Glu-118. The DRBM domain maps to 156-226; it reads DAKTLLQEHL…AAQVLELLKK (71 aa).

Belongs to the ribonuclease III family. Homodimer. The cofactor is Mg(2+).

It is found in the cytoplasm. It catalyses the reaction Endonucleolytic cleavage to 5'-phosphomonoester.. Its function is as follows. Digests double-stranded RNA. Involved in the processing of primary rRNA transcript to yield the immediate precursors to the large and small rRNAs (23S and 16S). Processes some mRNAs, and tRNAs when they are encoded in the rRNA operon. Processes pre-crRNA and tracrRNA of type II CRISPR loci if present in the organism. The polypeptide is Ribonuclease 3 (Shewanella baltica (strain OS223)).